The primary structure comprises 122 residues: Large ribosomal subunit protein uL14c (122 aa).

Belongs to the universal ribosomal protein uL14 family. As to quaternary structure, part of the 50S ribosomal subunit.

The protein resides in the plastid. The protein localises to the chloroplast. Functionally, binds to 23S rRNA. This Adiantum capillus-veneris (Maidenhair fern) protein is Large ribosomal subunit protein uL14c.